The chain runs to 65 residues: Large ribosomal subunit protein bL33c (65 aa).

This sequence belongs to the bacterial ribosomal protein bL33 family.

The protein resides in the plastid. It is found in the chloroplast. This Marchantia polymorpha (Common liverwort) protein is Large ribosomal subunit protein bL33c (rpl33).